The sequence spans 424 residues: 3-isopropylmalate dehydratase large subunit (424 aa).

Positions 299, 359, and 362 each coordinate [4Fe-4S] cluster.

Belongs to the aconitase/IPM isomerase family. LeuC type 2 subfamily. In terms of assembly, heterodimer of LeuC and LeuD. [4Fe-4S] cluster is required as a cofactor.

The catalysed reaction is (2R,3S)-3-isopropylmalate = (2S)-2-isopropylmalate. It functions in the pathway amino-acid biosynthesis; L-leucine biosynthesis; L-leucine from 3-methyl-2-oxobutanoate: step 2/4. In terms of biological role, catalyzes the isomerization between 2-isopropylmalate and 3-isopropylmalate, via the formation of 2-isopropylmaleate. The sequence is that of 3-isopropylmalate dehydratase large subunit from Hydrogenobaculum sp. (strain Y04AAS1).